A 433-amino-acid polypeptide reads, in one-letter code: Enolase (433 aa).

Gln-167 contacts (2R)-2-phosphoglycerate. The active-site Proton donor is the Glu-209. Residues Asp-246, Glu-291, and Asp-318 each coordinate Mg(2+). (2R)-2-phosphoglycerate contacts are provided by Lys-343, Arg-372, Ser-373, and Lys-394. Catalysis depends on Lys-343, which acts as the Proton acceptor.

It belongs to the enolase family. Component of the RNA degradosome, a multiprotein complex involved in RNA processing and mRNA degradation. Mg(2+) serves as cofactor.

Its subcellular location is the cytoplasm. It is found in the secreted. The protein resides in the cell surface. It carries out the reaction (2R)-2-phosphoglycerate = phosphoenolpyruvate + H2O. The protein operates within carbohydrate degradation; glycolysis; pyruvate from D-glyceraldehyde 3-phosphate: step 4/5. Its function is as follows. Catalyzes the reversible conversion of 2-phosphoglycerate (2-PG) into phosphoenolpyruvate (PEP). It is essential for the degradation of carbohydrates via glycolysis. The chain is Enolase from Marinomonas sp. (strain MWYL1).